The chain runs to 568 residues: Clathrin coat assembly protein AP180B (568 aa).

Residues 1-127 enclose the ENTH domain; it reads MSSLYTKLVK…EEYGRLGMDH (127 aa). Residues 262 to 283 are compositionally biased toward basic and acidic residues; it reads HLREETKRQRGEPSEPQQDRKP. Residues 262–302 form a disordered region; that stretch reads HLREETKRQRGEPSEPQQDRKPSTAISSTSSHNNNSNDKNK. Residue K282 forms a Glycyl lysine isopeptide (Lys-Gly) (interchain with G-Cter in ubiquitin) linkage. Positions 284–298 are enriched in low complexity; that stretch reads STAISSTSSHNNNSN. The residue at position 449 (T449) is a Phosphothreonine.

The protein belongs to the AP180 family. Interacts with PAN1 and the clathrin heavy and light chains CHC1 and CLC1.

Its subcellular location is the bud. It localises to the bud neck. The protein resides in the cell membrane. It is found in the cytoplasm. In terms of biological role, involved in endocytosis and clathrin cage assembly. The sequence is that of Clathrin coat assembly protein AP180B (YAP1802) from Saccharomyces cerevisiae (strain ATCC 204508 / S288c) (Baker's yeast).